A 458-amino-acid chain; its full sequence is UDP-N-acetylmuramate--L-alanine ligase (458 aa).

118 to 124 (GTHGKTT) is an ATP binding site.

It belongs to the MurCDEF family.

The protein resides in the cytoplasm. It carries out the reaction UDP-N-acetyl-alpha-D-muramate + L-alanine + ATP = UDP-N-acetyl-alpha-D-muramoyl-L-alanine + ADP + phosphate + H(+). It participates in cell wall biogenesis; peptidoglycan biosynthesis. In terms of biological role, cell wall formation. This is UDP-N-acetylmuramate--L-alanine ligase from Clostridium botulinum (strain Kyoto / Type A2).